Here is a 266-residue protein sequence, read N- to C-terminus: Large ribosomal subunit protein eL8 (266 aa).

A compositionally biased stretch (basic residues) spans 1-11 (MPKGKKAKGKK). Disordered stretches follow at residues 1 to 28 (MPKG…KKVV) and 105 to 134 (ETKQ…KRPP). A compositionally biased stretch (basic and acidic residues) spans 116–130 (ARAEQKAAGKGDAPT).

It belongs to the eukaryotic ribosomal protein eL8 family. As to quaternary structure, component of the large ribosomal subunit.

The protein resides in the cytoplasm. Its function is as follows. Component of the large ribosomal subunit. The ribosome is a large ribonucleoprotein complex responsible for the synthesis of proteins in the cell. In Takifugu rubripes (Japanese pufferfish), this protein is Large ribosomal subunit protein eL8 (rpl7a).